We begin with the raw amino-acid sequence, 63 residues long: Large ribosomal subunit protein bL32 (63 aa).

Residues 1–20 (MANPKAKMSKSRRDKRRAQF) are disordered. Over residues 7–18 (KMSKSRRDKRRA) the composition is skewed to basic residues.

The protein belongs to the bacterial ribosomal protein bL32 family.

The chain is Large ribosomal subunit protein bL32 from Chlorobaculum tepidum (strain ATCC 49652 / DSM 12025 / NBRC 103806 / TLS) (Chlorobium tepidum).